We begin with the raw amino-acid sequence, 347 residues long: NADH-quinone oxidoreductase subunit H (347 aa).

The next 8 membrane-spanning stretches (helical) occupy residues 13-33 (LIMIGQSLLLLVCLLVFIAYI), 82-102 (AVFLLAPLVSVVLALSTWAVV), 115-135 (VGILYILAISSLEVYGIIMGG), 161-181 (IGLVIVTVLLCVGSLNLTDIV), 198-218 (FLDWHWLSLFPMFIVFFISAL), 258-278 (AVVLMCSLTTILFLGGWLPPV), 286-306 (VPGIIWFMLKACFVFFMFAMV), and 321-341 (LGWKVFLPLSLAMVVIVAFVL).

It belongs to the complex I subunit 1 family. In terms of assembly, NDH-1 is composed of 14 different subunits. Subunits NuoA, H, J, K, L, M, N constitute the membrane sector of the complex.

The protein resides in the cell inner membrane. The enzyme catalyses a quinone + NADH + 5 H(+)(in) = a quinol + NAD(+) + 4 H(+)(out). In terms of biological role, NDH-1 shuttles electrons from NADH, via FMN and iron-sulfur (Fe-S) centers, to quinones in the respiratory chain. The immediate electron acceptor for the enzyme in this species is believed to be ubiquinone. Couples the redox reaction to proton translocation (for every two electrons transferred, four hydrogen ions are translocated across the cytoplasmic membrane), and thus conserves the redox energy in a proton gradient. This subunit may bind ubiquinone. This chain is NADH-quinone oxidoreductase subunit H, found in Rhizobium rhizogenes (strain K84 / ATCC BAA-868) (Agrobacterium radiobacter).